Consider the following 146-residue polypeptide: VHWTEKERTIITGIFSHMDYEDIGPKALSRCLIVYPWTQRHFSCFGNLYNAEAIMGNANVAAHGIKVLHGLDRGVKNMDNIVATYAELSILHSEKLHVDPDNFKLLSDCITIVVAAKMGHAFTGETQAAFQKFLAVVVSALGKQYH.

The Globin domain maps to His2–His146. The heme b site is built by His63 and His92.

The protein belongs to the globin family. In terms of assembly, hb1 is a heterotetramer of two alpha chains and two beta-1 chains. In terms of tissue distribution, red blood cells.

In terms of biological role, involved in oxygen transport from gills to the various peripheral tissues. The protein is Hemoglobin subunit beta-1 of Dissostichus eleginoides (Patagonian toothfish).